A 149-amino-acid chain; its full sequence is 3-hydroxyacyl-[acyl-carrier-protein] dehydratase FabZ (149 aa).

Histidine 53 is an active-site residue.

Belongs to the thioester dehydratase family. FabZ subfamily.

Its subcellular location is the cytoplasm. It catalyses the reaction a (3R)-hydroxyacyl-[ACP] = a (2E)-enoyl-[ACP] + H2O. Involved in unsaturated fatty acids biosynthesis. Catalyzes the dehydration of short chain beta-hydroxyacyl-ACPs and long chain saturated and unsaturated beta-hydroxyacyl-ACPs. The chain is 3-hydroxyacyl-[acyl-carrier-protein] dehydratase FabZ from Polynucleobacter necessarius subsp. necessarius (strain STIR1).